Reading from the N-terminus, the 49-residue chain is Large ribosomal subunit protein bL33A (49 aa).

It belongs to the bacterial ribosomal protein bL33 family.

The sequence is that of Large ribosomal subunit protein bL33A from Latilactobacillus sakei subsp. sakei (strain 23K) (Lactobacillus sakei subsp. sakei).